Here is a 652-residue protein sequence, read N- to C-terminus: Na(+)/H(+) antiporter NhaA 1 (652 aa).

The tract at residues 1–427 is na(+)/H(+) antiporter NhaA; the sequence is MTGELPRGRR…VGASLTTWLV (427 aa). Transmembrane regions (helical) follow at residues 27-47, 78-98, 114-134, 142-162, 173-193, 200-220, 227-247, 312-332, 343-363, 376-396, and 411-431; these read AFLHTETGSARVLLAAAVVAL, LRYWVNSGLMTFFFLVIGLEV, TLPLLAGIGGILVPIAIYLAF, VGWGVVMATDTALALGMLAVL, FLLTVAVVDDLIVIAVLAIAY, TALFVAAGIFALVLLIRAAGG, LLLGVAAWLAVSESGVDPVVV, LIVPLFALANVGVVVDGELLA, VLFAYVVGKPAGIVIASMLVA, WAAIIGVGTVSGIGFTIALLI, and IGILVATVGASLTTWLVFRLA. Positions 428–623 constitute a Thioredoxin domain; it reads FRLAARLPPA…LSAAVTSAFA (196 aa). The tract at residues 626–652 is disordered; that stretch reads RLRPRDDREPDRRREVGSEQPDEEPGT. A compositionally biased stretch (basic and acidic residues) spans 628–642; that stretch reads RPRDDREPDRRREVG.

This sequence in the N-terminal section; belongs to the NhaA Na(+)/H(+) (TC 2.A.33) antiporter family.

Its subcellular location is the cell membrane. It carries out the reaction Na(+)(in) + 2 H(+)(out) = Na(+)(out) + 2 H(+)(in). Na(+)/H(+) antiporter that extrudes sodium in exchange for external protons. In Salinispora arenicola (strain CNS-205), this protein is Na(+)/H(+) antiporter NhaA 1.